The primary structure comprises 195 residues: PRELI domain containing protein 3B (195 aa).

Positions Met1 to Glu172 constitute a PRELI/MSF1 domain. 2 positions are modified to phosphoserine: Ser46 and Ser51.

It belongs to the slowmo family.

The sequence is that of PRELI domain containing protein 3B (Prelid3b) from Mus musculus (Mouse).